A 302-amino-acid polypeptide reads, in one-letter code: Nudix hydrolase 5 (302 aa).

Residues 122 to 254 (SHRIGIGAFV…EGNEMFKLIA (133 aa)) enclose the Nudix hydrolase domain. Residues 159-180 (GTIKEGESIWAGAVREVKEETD) carry the Nudix box motif. 2 residues coordinate Mg(2+): E174 and E178.

It belongs to the Nudix hydrolase family. Mg(2+) is required as a cofactor. It depends on Mn(2+) as a cofactor. As to expression, expressed in roots, stems and leaves.

Probably mediates the hydrolysis of some nucleoside diphosphate derivatives. The protein is Nudix hydrolase 5 (NUDT5) of Arabidopsis thaliana (Mouse-ear cress).